A 185-amino-acid polypeptide reads, in one-letter code: Ribosome-recycling factor (185 aa).

It belongs to the RRF family.

Its subcellular location is the cytoplasm. Functionally, responsible for the release of ribosomes from messenger RNA at the termination of protein biosynthesis. May increase the efficiency of translation by recycling ribosomes from one round of translation to another. This chain is Ribosome-recycling factor, found in Shewanella denitrificans (strain OS217 / ATCC BAA-1090 / DSM 15013).